Reading from the N-terminus, the 299-residue chain is Transcription factor BHLH148 (299 aa).

Positions 90 to 127 are disordered; the sequence is RMGGGGGGGEKGEGEEMEEEEEVPQRRRRGQGADVESS. Over residues 102–111 the composition is skewed to acidic residues; that stretch reads EGEEMEEEEE. Residues 127-140 are basic motif; degenerate; the sequence is SRGFRHMMRERQRR. The region spanning 127–176 is the bHLH domain; the sequence is SRGFRHMMRERQRREKLSQSYADLYAMVSSRSKGDKNSIVQSAAIYIHEL. The segment at 141–176 is helix-loop-helix motif; it reads EKLSQSYADLYAMVSSRSKGDKNSIVQSAAIYIHEL. The disordered stretch occupies residues 273 to 299; the sequence is ERNQPDSDAPFPGSKGWTQTSHVQNVF. Residues 288–299 are compositionally biased toward polar residues; that stretch reads GWTQTSHVQNVF.

It belongs to the bHLH protein family. Interacts with TIFY10A/JAZ6, TIFY10B/JAZ7, TIFY11A/JAZ9, TIFY11C/JAZ11, and TIFY11D/JAZ12.

It localises to the nucleus. May act on an initial response of jasmonate-regulated gene expression toward drought tolerance as part of a BHLH148-TIFY11D/JAZ12-COI1A complex. This Oryza sativa subsp. japonica (Rice) protein is Transcription factor BHLH148.